We begin with the raw amino-acid sequence, 440 residues long: Elongation factor 1-alpha (440 aa).

The region spanning 5-228 (KPHINLVVIG…ALDTYIQPPK (224 aa)) is the tr-type G domain. The G1 stretch occupies residues 14 to 21 (GHVDHGKS). 14-21 (GHVDHGKS) is a GTP binding site. Ser21 contacts Mg(2+). Residues 70–74 (GVTID) are G2. The tract at residues 91-94 (DAPG) is G3. GTP-binding positions include 91-95 (DAPGH) and 153-156 (NKMD). A G4 region spans residues 153 to 156 (NKMD). Residues 194 to 196 (SAW) form a G5 region.

Belongs to the TRAFAC class translation factor GTPase superfamily. Classic translation factor GTPase family. EF-Tu/EF-1A subfamily.

The protein localises to the cytoplasm. It carries out the reaction GTP + H2O = GDP + phosphate + H(+). Functionally, GTP hydrolase that promotes the GTP-dependent binding of aminoacyl-tRNA to the A-site of ribosomes during protein biosynthesis. The protein is Elongation factor 1-alpha of Hyperthermus butylicus (strain DSM 5456 / JCM 9403 / PLM1-5).